A 181-amino-acid polypeptide reads, in one-letter code: Mating-type M-specific polypeptide Mc (181 aa).

Residues 103–171 (TPRPPNAFIL…QHQKMYPGYK (69 aa)) constitute a DNA-binding region (HMG box).

Its subcellular location is the nucleus. The protein localises to the cytoplasm. The protein resides in the cytoskeleton. It localises to the microtubule organizing center. It is found in the spindle pole body. Functionally, mating type proteins are sequence specific DNA-binding proteins that act as master switches in yeast differentiation by controlling gene expression in a cell type-specific fashion. Positive regulator of MFM genes. The HMG box recognizes the DNA sequence 5'-AACAAAG-3'. Required for conjugation and efficient meiosis. This Schizosaccharomyces pombe (Fission yeast) protein is Mating-type M-specific polypeptide Mc (mat3-Mc).